We begin with the raw amino-acid sequence, 262 residues long: uncharacterized protein (262 aa).

Residues 6–70 form the S4 RNA-binding domain; that stretch reads LRINQFLAHY…LKNKKFSVLV (65 aa). The active-site Nucleophile is Asp-108.

The protein belongs to the pseudouridine synthase RsuA family.

The catalysed reaction is a uridine in RNA = a pseudouridine in RNA. This is an uncharacterized protein from Helicobacter pylori (strain ATCC 700392 / 26695) (Campylobacter pylori).